The primary structure comprises 148 residues: 3-dehydroquinate dehydratase (148 aa).

The active-site Proton acceptor is Y26. Positions 77, 83, and 90 each coordinate substrate. The Proton donor role is filled by H103. Substrate-binding positions include 104–105 and R114; that span reads LS.

The protein belongs to the type-II 3-dehydroquinase family. As to quaternary structure, homododecamer.

The catalysed reaction is 3-dehydroquinate = 3-dehydroshikimate + H2O. The protein operates within metabolic intermediate biosynthesis; chorismate biosynthesis; chorismate from D-erythrose 4-phosphate and phosphoenolpyruvate: step 3/7. Catalyzes a trans-dehydration via an enolate intermediate. The chain is 3-dehydroquinate dehydratase (aroQ) from Pasteurella multocida (strain Pm70).